A 390-amino-acid polypeptide reads, in one-letter code: Acid protease (390 aa).

Positions 1 to 18 (MLFSKSLLLSVLASLSFA) are cleaved as a signal peptide. The Peptidase A1 domain maps to 75–386 (YLTTIEIGTP…DIDNSQVGIA (312 aa)). Catalysis depends on residues Asp93 and Asp282.

It belongs to the peptidase A1 family.

This chain is Acid protease (PEP1), found in Saccharomycopsis fibuligera (Yeast).